Consider the following 274-residue polypeptide: NAD-dependent protein deacylase (274 aa).

The Deacetylase sirtuin-type domain occupies 4–274 (CLLPSSDMDA…GELLPKALAP (271 aa)). An NAD(+)-binding site is contributed by 29 to 48 (GAGVSAESGVPTFRGAGGLW). Residues tyrosine 73 and arginine 76 each contribute to the substrate site. 111–114 (QNID) contacts NAD(+). Histidine 129 (proton acceptor) is an active-site residue. 4 residues coordinate Zn(2+): cysteine 137, cysteine 140, cysteine 178, and cysteine 183. NAD(+) is bound by residues 220-222 (GTS), 246-248 (NME), and cysteine 264.

This sequence belongs to the sirtuin family. Class III subfamily. Zn(2+) serves as cofactor.

The protein resides in the mitochondrion. It catalyses the reaction N(6)-malonyl-L-lysyl-[protein] + NAD(+) + H2O = 2''-O-malonyl-ADP-D-ribose + nicotinamide + L-lysyl-[protein]. The enzyme catalyses N(6)-succinyl-L-lysyl-[protein] + NAD(+) + H2O = 2''-O-succinyl-ADP-D-ribose + nicotinamide + L-lysyl-[protein]. The catalysed reaction is N(6)-glutaryl-L-lysyl-[protein] + NAD(+) + H2O = 2''-O-glutaryl-ADP-D-ribose + nicotinamide + L-lysyl-[protein]. NAD-dependent lysine demalonylase, desuccinylase and deglutarylase that specifically removes malonyl, succinyl and glutaryl groups on target proteins. Has weak NAD-dependent protein deacetylase activity; however this activity may not be physiologically relevant in vivo. The protein is NAD-dependent protein deacylase of Daphnia pulex (Water flea).